A 976-amino-acid polypeptide reads, in one-letter code: Vacuolar membrane protease (976 aa).

Topologically, residues 1-15 (MKLKSVFRSVLKYRK) are cytoplasmic. Residues 16-36 (TNLSLLLLITYSIITLLYIFD) traverse the membrane as a helical segment. The Vacuolar segment spans residues 37–359 (HERYKLNLPK…KFFVISAKTL (323 aa)). Residues Asn96 and Asn121 are each glycosylated (N-linked (GlcNAc...) asparagine). Residues His156 and Asp168 each coordinate Zn(2+). An N-linked (GlcNAc...) asparagine glycan is attached at Asn189. The Proton acceptor role is filled by Glu200. Position 201 (Glu201) interacts with Zn(2+). N-linked (GlcNAc...) asparagine glycosylation is found at Asn212 and Asn217. The Zn(2+) site is built by Glu226 and His300. A helical transmembrane segment spans residues 360-380 (FYWNCIFLLVSPVVAIGLYLI). At 381-392 (SRDRMTWKSHSW) the chain is on the cytoplasmic side. A helical transmembrane segment spans residues 393–412 (LSWTRFPLSLAAGIIVQKLF). At 413 to 428 (SNDIIRSNPLTFSRNY) the chain is on the vacuolar side. A helical membrane pass occupies residues 429–449 (FWPISAFFTQVIFTSYVLINC). The Cytoplasmic segment spans residues 450–461 (SNFFFPCADMKS). A helical membrane pass occupies residues 462 to 482 (LSIIELFIILWTILLFTSKLL). Residues 483–496 (YSSDYRYTGLYPLS) lie on the Vacuolar side of the membrane. Residues 497–517 (IFFLLSTIAAILRLLALALGM) traverse the membrane as a helical segment. The Cytoplasmic segment spans residues 518-627 (RTRKRLGREC…NSLKLEYTDY (110 aa)). A disordered region spans residues 528 to 610 (RDHHSNYSSH…PLLKGSNSME (83 aa)). Residues 549-558 (NLEQPQDQFT) are compositionally biased toward polar residues. Residues 559–570 (SSQDDQASIQDD) are compositionally biased toward low complexity. Over residues 582–601 (NVDEDHGMDSSSQQHDERVP) the composition is skewed to basic and acidic residues. Residues 628-648 (AWIIQFLLIVPIPSFILFNSV) form a helical membrane-spanning segment. The Vacuolar portion of the chain corresponds to 649-668 (DVIMDALNHTVQEGSKATFD). N-linked (GlcNAc...) asparagine glycosylation is present at Asn656. The helical transmembrane segment at 669–689 (VLRFGMVGSILMALPILPFFY) threads the bilayer. The Cytoplasmic segment spans residues 690–692 (KVN). The helical transmembrane segment at 693–713 (YITISLTALLFLISASKTLLV) threads the bilayer. The Vacuolar portion of the chain corresponds to 714 to 976 (HPFTNSNPLK…LVIVKDAIIL (263 aa)). Residues Asn768, Asn796, Asn811, Asn866, and Asn937 are each glycosylated (N-linked (GlcNAc...) asparagine).

The protein belongs to the peptidase M28 family. It depends on Zn(2+) as a cofactor.

The protein localises to the vacuole membrane. May be involved in vacuolar sorting and osmoregulation. The sequence is that of Vacuolar membrane protease from Saccharomyces cerevisiae (strain AWRI1631) (Baker's yeast).